The sequence spans 1448 residues: MALETEAKNSNATATGDATATATKASGKAKENNNTAGGKKNLNPNSNQQNSNQNLVNGNGTAADGPAAKKKGKKNRNKSPTEPTTEAVLSNGHAEKPTVVDAVEDNADTNANVEKPQEGGAPDAEADGDDIDLDALQDIGITVNISSPGADLLCVQLSSMELVQEIHQLLMDREETCHRTCFSLQLDNVTLDNFAELKSINNLEQGSTIKVVEEPYTMREARIHVRHVRDLLKNLDPADAYNGIDCTSLTYLNTITQGDLLDKKRTRPDSVDCTPPEYVTPGVSDPPILPLHPNVKNAKGPQALKVLTTSAWNPPPGPRKLHGDLMYLYVVTMEDKRFHISACSKGFFINQSTDDTFNPKPDNPSHLSHSLIDLLSHISPSFRRAFQTIQKRRTMRHAFERVATPYQVYQWAAPILEHTVDAIRAEDAFSSKLGYEEHIPGQTRDWNEELQTTRELPRKTLPERLLRERAIFKVHGDFVTAATRGAMAVIDGNVLAINPGEDTKMQMFIWNNIFFSMGFDVRDHYKELGGDAAAFVAPRYDLHGVRVYNAVDIEGLYTLGTVVVDYRGYRVTAQSIIPGILEREQEQSVVYGSIDFGKTVLSHPKYLELLRQAGKHLKILPHVVLNERDEPVELCSSVECKGIIGNDGRHYILDLLRTFPPDVNFLKLQDVQLSKELVDMGFPIEHRHKLCCLRQELLEAFIEDRHVNFIRIAAARLQQLTTIKQSEKSEANPVPALEGAEAASKVNGAEKPDDKEKKNEEEEKKERSTSGEARAAAIVNAIREAQSNVATSNEVQAAEVVKRACAAVGSLKEKEFDFRFNPDVFSPGIRHADGEEGTSLAKQKVLVQEAAEFLVLKQIPAFIKEHMSHSSSPIDGQSLTESLHSHGINVRYLGKVIKILSQMPRMDYLHRIAVLELIVRATKHIYYTYMQNTEPLHLSAAISHFLNCLLTNGPVNPAVSSEEAHKKRGNGGKHNKHKSSKGGKGQQQQQTTGNQNGSSSGSSNSSSASDWTLMTPRSLWQQIRKEAKVYWDWELDCDSIETAVSKYGILRISLMRAFCLKVGIQVLLREYNFESKHKPTFGDDDIVNVFPIVKHISPRATDAYNFYTTGQAKIQQGLFKEGYELISGALNLLNNVFGALHQENGSCLRMLARLSYLLGDAQDALAIQQRAVIMSERVNGMDHPSTILEYTHLSLYSFANGHVGMSLKLLYRARYLMVLICGEDHPEVALIDSNISLILHALGEYELSLRFIEHALKLNLKYFGDKDMHVALSYHLMARTQSCMGDFRSALNNEKETYSFYKSQLGENHEKTRDSAECLRLLTQQAVLLQRKMNDIYSSGKLTSDLPPIHITPPSMGSVLDMLNTINGILFVKISRKDIVKVRSEIEKHFKTDSTENEVNDAINSIVAAANNNGEAEDAVSKDIKEQPEAGKQLTNGDKAAATEATSS.

Disordered stretches follow at residues 1–96 (MALE…HAEK), 110–129 (NANV…ADGD), and 265–286 (RTRP…VSDP). 2 stretches are compositionally biased toward low complexity: residues 9-26 (NSNA…TKAS) and 41-66 (NLNP…ADGP). Over residues 68–77 (AKKKGKKNRN) the composition is skewed to basic residues. The span at 78–88 (KSPTEPTTEAV) shows a compositional bias: polar residues. Position 270 is a phosphoserine (serine 270). In terms of domain architecture, Clu spans 424 to 666 (RAEDAFSSKL…RTFPPDVNFL (243 aa)). Disordered stretches follow at residues 726–773 (SEKS…SGEA), 958–1010 (AVSS…SASD), and 1414–1448 (GEAE…ATSS). The span at 748 to 769 (GAEKPDDKEKKNEEEEKKERST) shows a compositional bias: basic and acidic residues. Positions 966–981 (KKRGNGGKHNKHKSSK) are enriched in basic residues. Residues 986-1007 (QQQQQTTGNQNGSSSGSSNSSS) show a composition bias toward low complexity. Basic and acidic residues predominate over residues 1419-1429 (AVSKDIKEQPE).

This sequence belongs to the CLU family.

The protein resides in the cytoplasm. Its function is as follows. mRNA-binding protein involved in proper cytoplasmic distribution of mitochondria. In Drosophila melanogaster (Fruit fly), this protein is Protein clueless.